A 245-amino-acid polypeptide reads, in one-letter code: Ribosomal RNA small subunit methyltransferase G (245 aa).

S-adenosyl-L-methionine contacts are provided by residues Gly79, Phe84, 130-131 (AE), and Arg150.

This sequence belongs to the methyltransferase superfamily. RNA methyltransferase RsmG family.

Its subcellular location is the cytoplasm. In terms of biological role, specifically methylates the N7 position of a guanine in 16S rRNA. This chain is Ribosomal RNA small subunit methyltransferase G, found in Limosilactobacillus fermentum (strain NBRC 3956 / LMG 18251) (Lactobacillus fermentum).